Consider the following 163-residue polypeptide: Staphylokinase (163 aa).

The first 27 residues, 1-27 (MLKRGLLFLTVLLLLFSFSSITNEVSA), serve as a signal peptide directing secretion.

Belongs to the staphylokinase family.

It is found in the secreted. In terms of biological role, potent plasminogen activator that converts plasminogen into plasmin. It forms a 1:1 complex with plasmin, which in turn activates other plasminogen molecules. The sequence is that of Staphylokinase (sak) from Staphylococcus aureus (strain MRSA252).